A 262-amino-acid chain; its full sequence is Protein N-terminal and lysine N-methyltransferase EFM7 (262 aa).

S-adenosyl-L-methionine-binding positions include tryptophan 59, 86–88 (GAA), aspartate 108, tryptophan 143, and serine 171.

Belongs to the class I-like SAM-binding methyltransferase superfamily. EFM7 family.

Its subcellular location is the cytoplasm. In terms of biological role, S-adenosyl-L-methionine-dependent protein methyltransferase that trimethylates the N-terminal glycine 'Gly-2' of elongation factor 1-alpha, before also catalyzing the mono- and dimethylation of 'Lys-3'. In Candida albicans (strain SC5314 / ATCC MYA-2876) (Yeast), this protein is Protein N-terminal and lysine N-methyltransferase EFM7.